The primary structure comprises 243 residues: Zwei Ig domain protein zig-6 (243 aa).

The N-terminal stretch at 1–20 is a signal peptide; sequence MTKLCLLLLPLVFLVSYSFA. Ig-like C2-type domains lie at 30–118 and 133–212; these read PNAN…MDVI and GQVL…KTVT. Cys-47 and Cys-102 are oxidised to a cystine. Asn-91 and Asn-142 each carry an N-linked (GlcNAc...) asparagine glycan. Cys-145 and Cys-196 form a disulfide bridge.

Expressed in head and tail body wall muscles.

It is found in the secreted. In terms of biological role, probably not involved in maintaining the position of ASI and ASH head neuron cell bodies and ventral nerve cord axons of PVQ, PVP, RMEV, AVK and HSN neurons. This Caenorhabditis elegans protein is Zwei Ig domain protein zig-6.